Consider the following 308-residue polypeptide: Ava biosynthesis cluster protein O (308 aa).

The protein operates within secondary metabolite biosynthesis. In terms of biological role, part of the cluster that mediates the biosynthesis of a highly modified cyclo-arginine-tryptophan dipeptide (cRW). The first step of the pathway is perfornmed by the arginine-containing cyclodipeptide synthase (RCPDS) avaA that acts as the scaffold-generating enzyme and is responsible for formation of the cyclo-Arg-Trp (cRW) diketopiperazine. AvaB then acts as a multifunctional flavoenzyme that is responsible for generating the cyclo-Arg-formylkynurenine DKP, which can be deformylated by avaC. AvaB then further catalyzes an additional N-oxidation followed by cyclization and dehydration. The next step is an N-acetylation of the guanidine group catalyzed by the arginine N-acetyltransferase avaD. The roles of the additional enzymes identified within the ava cluster still have to be determined. This Aspergillus versicolor protein is Ava biosynthesis cluster protein O.